We begin with the raw amino-acid sequence, 319 residues long: Acetyl esterase (319 aa).

An Involved in the stabilization of the negatively charged intermediate by the formation of the oxyanion hole motif is present at residues 91–93; that stretch reads HGG. Active-site residues include S165, D262, and H292.

This sequence belongs to the 'GDXG' lipolytic enzyme family. In terms of assembly, homodimer. Interacts with MalT and MelA.

It localises to the cytoplasm. Its function is as follows. Displays esterase activity towards short chain fatty esters (acyl chain length of up to 8 carbons). Able to hydrolyze triacetylglycerol (triacetin) and tributyrylglycerol (tributyrin), but not trioleylglycerol (triolein) or cholesterol oleate. Negatively regulates MalT activity by antagonizing maltotriose binding. Inhibits MelA galactosidase activity. The sequence is that of Acetyl esterase from Escherichia coli O6:H1 (strain CFT073 / ATCC 700928 / UPEC).